The primary structure comprises 417 residues: Glucose-1-phosphate adenylyltransferase (417 aa).

Alpha-D-glucose 1-phosphate is bound by residues tyrosine 105, glycine 170, 185 to 186 (EK), and serine 203.

It belongs to the bacterial/plant glucose-1-phosphate adenylyltransferase family. As to quaternary structure, homotetramer.

It catalyses the reaction alpha-D-glucose 1-phosphate + ATP + H(+) = ADP-alpha-D-glucose + diphosphate. Its pathway is glycan biosynthesis; glycogen biosynthesis. Its function is as follows. Involved in the biosynthesis of ADP-glucose, a building block required for the elongation reactions to produce glycogen. Catalyzes the reaction between ATP and alpha-D-glucose 1-phosphate (G1P) to produce pyrophosphate and ADP-Glc. The polypeptide is Glucose-1-phosphate adenylyltransferase (Granulibacter bethesdensis (strain ATCC BAA-1260 / CGDNIH1)).